Here is a 600-residue protein sequence, read N- to C-terminus: Melanophilin (600 aa).

One can recognise a RabBD domain in the interval 4-124 (KLDLSKLTDE…IGSLEWYYEH (121 aa)). The FYVE-type zinc finger occupies 64–107 (CARCLQPYQLLVNSKRQCLECGLFTCKSCGRVHPEEQGWICDPC). Disordered stretches follow at residues 146–277 (QGGA…AELC), 390–465 (EELT…LSEL), 499–541 (TVKP…AKAM), and 553–600 (NSLK…AHQS). Composition is skewed to basic and acidic residues over residues 232–243 (CSEKAAPHKAEG) and 409–420 (KDEKAEPNRDKS). Positions 373-496 (GVRTEADVEE…ESRIAALRAA (124 aa)) form a coiled coil. The segment covering 558-569 (QGKDDDSFDRKS) has biased composition (basic and acidic residues).

As to quaternary structure, binds RAB27A that has been activated by GTP-binding via its N-terminus. Binds MYO5A via its C-terminal coiled coil domain.

The protein localises to the cytoplasm. Rab effector protein involved in melanosome transport. Serves as link between melanosome-bound RAB27A and the motor protein MYO5A. The chain is Melanophilin (MLPH) from Homo sapiens (Human).